Consider the following 152-residue polypeptide: D-erythrulose-4-phosphate isomerase (152 aa).

The Proton acceptor role is filled by C67.

This sequence belongs to the LacAB/RpiB family.

It catalyses the reaction D-erythrulose 4-phosphate = D-erythrose 4-phosphate. It functions in the pathway carbohydrate metabolism. In terms of biological role, involved in catabolism of D-apiose. Catalyzes the isomerization of D-erythrulose 4-phosphate to D-erythrose 4-phosphate. This is D-erythrulose-4-phosphate isomerase from Pectobacterium atrosepticum (strain SCRI 1043 / ATCC BAA-672) (Erwinia carotovora subsp. atroseptica).